The sequence spans 436 residues: Putative actin-fragmin kinase DDB_G0268748 (436 aa).

A disordered region spans residues 14 to 58 (DKNIDSGSSSSNIGGSSSNSSGTTNKRSSGNFNGSSASSSPSSST). The span at 18–57 (DSGSSSSNIGGSSSNSSGTTNKRSSGNFNGSSASSSPSSS) shows a compositional bias: low complexity.

This sequence belongs to the protein kinase superfamily. AFK Ser/Thr protein kinase family.

In Dictyostelium discoideum (Social amoeba), this protein is Putative actin-fragmin kinase DDB_G0268748.